Reading from the N-terminus, the 141-residue chain is HTH-type transcriptional repressor NsrR (141 aa).

The HTH rrf2-type domain occupies 2–129 (QLTSFTDYAL…DDCTIEELLS (128 aa)). Positions 28 to 51 (ITEVTDLFGVSRNHMVKVINRLGQ) form a DNA-binding region, H-T-H motif. [2Fe-2S] cluster contacts are provided by C91, C96, and C102.

It depends on [2Fe-2S] cluster as a cofactor.

Its function is as follows. Nitric oxide-sensitive repressor of genes involved in protecting the cell against nitrosative stress. May require iron for activity. The polypeptide is HTH-type transcriptional repressor NsrR (Vibrio campbellii (strain ATCC BAA-1116)).